Consider the following 394-residue polypeptide: Venom metalloproteinase antarease TserMP_A (394 aa).

A signal peptide spans 1–16 (MISYLASIFLLATVSA). A propeptide spanning residues 17-157 (VPSGRVEVVF…NAENVSRMAR (141 aa)) is cleaved from the precursor. A Peptidase M12B domain is found at 162 to 391 (IVVEYYIVTD…PTASCIFQQC (230 aa)). Residues Cys-295 and Cys-386 are joined by a disulfide bond. Residue His-319 coordinates Zn(2+). Glu-320 is a catalytic residue. Residues His-323 and His-329 each contribute to the Zn(2+) site.

The cofactor is Zn(2+). Contains 4 disulfide bonds. Expressed by the venom gland.

Its subcellular location is the secreted. Its activity is regulated as follows. Inhibited by EDTA. In terms of biological role, acts as a metalloprotease. Penetrates intact tissue and specifically cleaves the vesicle-associated membrane protein 2 (VAMP2) (part of the SNARE complex) involved in pancreatic secretion, thus disrupting the normal vesicular traffic. This is Venom metalloproteinase antarease TserMP_A from Tityus serrulatus (Brazilian scorpion).